The primary structure comprises 1334 residues: Lysine-specific demethylase 3A-B (1334 aa).

Disordered regions lie at residues 243-288, 352-382, and 514-533; these read DQND…KTSF, PGIQ…SQNL, and KPQE…VTYP. Positions 267–283 are enriched in basic and acidic residues; that stretch reads TEVKQTRNEEVPSKDVT. The segment at 684–709 adopts a C6-type zinc-finger fold; the sequence is CDACDTTIFNLHWVCPKCGFGVCVDC. The short motif at 897 to 901 is the LXXLL motif element; that stretch reads LRNLL. Residues 1089–1294 enclose the JmjC domain; it reads RREGKLNLAA…HCFCLTQEFR (206 aa). Fe cation is bound by residues His1133, Asp1135, and His1262.

The protein belongs to the JHDM2 histone demethylase family. The cofactor is Fe(2+).

It is found in the cytoplasm. It localises to the nucleus. It carries out the reaction N(6),N(6)-dimethyl-L-lysyl(9)-[histone H3] + 2 2-oxoglutarate + 2 O2 = L-lysyl(9)-[histone H3] + 2 formaldehyde + 2 succinate + 2 CO2. Its function is as follows. Histone demethylase that specifically demethylates 'Lys-9' of histone H3, thereby playing a central role in histone code. Preferentially demethylates mono- and dimethylated H3 'Lys-9' residue, with a preference for dimethylated residue, while it has weak or no activity on trimethylated H3 'Lys-9'. Demethylation of Lys residue generates formaldehyde and succinate. This is Lysine-specific demethylase 3A-B (kdm3a-b) from Xenopus laevis (African clawed frog).